Consider the following 215-residue polypeptide: Deoxyribose-phosphate aldolase (215 aa).

D89 serves as the catalytic Proton donor/acceptor. Residue K153 is the Schiff-base intermediate with acetaldehyde of the active site. K182 (proton donor/acceptor) is an active-site residue.

This sequence belongs to the DeoC/FbaB aldolase family. DeoC type 1 subfamily.

The protein localises to the cytoplasm. The enzyme catalyses 2-deoxy-D-ribose 5-phosphate = D-glyceraldehyde 3-phosphate + acetaldehyde. It functions in the pathway carbohydrate degradation; 2-deoxy-D-ribose 1-phosphate degradation; D-glyceraldehyde 3-phosphate and acetaldehyde from 2-deoxy-alpha-D-ribose 1-phosphate: step 2/2. In terms of biological role, catalyzes a reversible aldol reaction between acetaldehyde and D-glyceraldehyde 3-phosphate to generate 2-deoxy-D-ribose 5-phosphate. This chain is Deoxyribose-phosphate aldolase, found in Lactiplantibacillus plantarum (strain ATCC BAA-793 / NCIMB 8826 / WCFS1) (Lactobacillus plantarum).